The following is a 249-amino-acid chain: Segregation and condensation protein A (249 aa).

This sequence belongs to the ScpA family. Component of a cohesin-like complex composed of ScpA, ScpB and the Smc homodimer, in which ScpA and ScpB bind to the head domain of Smc. The presence of the three proteins is required for the association of the complex with DNA.

It is found in the cytoplasm. Its function is as follows. Participates in chromosomal partition during cell division. May act via the formation of a condensin-like complex containing Smc and ScpB that pull DNA away from mid-cell into both cell halves. The chain is Segregation and condensation protein A from Clostridium acetobutylicum (strain ATCC 824 / DSM 792 / JCM 1419 / IAM 19013 / LMG 5710 / NBRC 13948 / NRRL B-527 / VKM B-1787 / 2291 / W).